A 56-amino-acid chain; its full sequence is 4Fe-4S ferredoxin FdxA (56 aa).

4Fe-4S ferredoxin-type domains lie at 1-28 and 29-56; these read MAYVINEACISCGACEPECPVNAISSGD and DRYVIDADTCIDCGACAGVCPVDAPVQA. Residues C9, C12, C15, C19, C38, C41, C44, and C48 each coordinate [4Fe-4S] cluster.

[4Fe-4S] cluster is required as a cofactor.

Functionally, ferredoxins are iron-sulfur proteins that transfer electrons in a wide variety of metabolic reactions. This is 4Fe-4S ferredoxin FdxA from Gottschalkia acidurici (strain ATCC 7906 / DSM 604 / BCRC 14475 / CIP 104303 / KCTC 5404 / NCIMB 10678 / 9a) (Clostridium acidurici).